The primary structure comprises 157 residues: ASHANLAIDQISEQNFQPRIHVVKGFSISTAVVCHQCEDAPCANVCPNGAIIHNKDYYYVDQDKCIGCKTCVLACPYGTMEVVSRPVMRKLTALNTIEAFKAEANKCDLCHHRAEGPACVEVCPTQALVCIDRDALEDMVKERRRKAAFETGADLLF.

4Fe-4S ferredoxin-type domains follow at residues 24–55 (KGFSISTAVVCHQCEDAPCANVCPNGAIIHNK), 56–85 (DYYYVDQDKCIGCKTCVLACPYGTMEVVSR), and 100–133 (FKAEANKCDLCHHRAEGPACVEVCPTQALVCIDR). [4Fe-4S] cluster-binding residues include Cys34, Cys37, Cys42, Cys46, Cys65, Cys68, Cys71, Cys75, Cys107, Cys110, Cys119, and Cys123.

In Proteus vulgaris, this protein is Frd operon probable iron-sulfur subunit A.